Reading from the N-terminus, the 28-residue chain is Cyclotide vodo I1 (28 aa).

3 disulfide bridges follow: cysteine 4–cysteine 18, cysteine 8–cysteine 20, and cysteine 13–cysteine 25.

In terms of processing, this is a cyclic peptide. Contains 3 disulfide bonds.

Probably participates in a plant defense mechanism. The polypeptide is Cyclotide vodo I1 (Viola odorata (Sweet violet)).